The primary structure comprises 122 residues: MIQPQTHLNVADNSGARELMCIRIIGTSNRRYAHIGDVIVAVIKEVVPNMPLERSEVIRAVIVRTCKELKRDNGMIIRYDDNAAVIIDQEGNPKGTRIFGAIVRELRQLNFTKIVSLAPEVL.

It belongs to the universal ribosomal protein uL14 family. As to quaternary structure, part of the 50S ribosomal subunit.

It localises to the plastid. It is found in the chloroplast. Its function is as follows. Binds to 23S rRNA. The chain is Large ribosomal subunit protein uL14c from Vitis vinifera (Grape).